The following is a 607-amino-acid chain: All-trans-retinol 13,14-reductase (607 aa).

The signal sequence occupies residues 1 to 22; the sequence is MWFAVVAIFLALVAFLYRYVVG.

This sequence belongs to the carotenoid/retinoid oxidoreductase family. CrtISO subfamily. NAD(+) serves as cofactor. It depends on NADP(+) as a cofactor. The cofactor is FAD.

It localises to the endoplasmic reticulum membrane. It catalyses the reaction all-trans-13,14-dihydroretinol + A = all-trans-retinol + AH2. Catalyzes the saturation of all-trans-retinol to all-trans-13,14-dihydroretinol. In addition, saturates the 7-8 double bond of all-trans-retinol to produce all-trans-7,8-dihydroretinol. Can also use vitamin A2 (all-trans-3,4-didehydroretinol) as a substrate, to produce all-trans-13,14-dihydro-3,4-didehydroretinol or all-trans-7,8-dihydro-3,4-didehydroretinol. May play a role in vitamin A metabolism. This Danio rerio (Zebrafish) protein is All-trans-retinol 13,14-reductase.